The following is a 581-amino-acid chain: Arginine--tRNA ligase (581 aa).

Positions 126-136 (PNLAKEMHVGH) match the 'HIGH' region motif.

The protein belongs to the class-I aminoacyl-tRNA synthetase family. In terms of assembly, monomer.

It is found in the cytoplasm. It catalyses the reaction tRNA(Arg) + L-arginine + ATP = L-arginyl-tRNA(Arg) + AMP + diphosphate. In Shewanella woodyi (strain ATCC 51908 / MS32), this protein is Arginine--tRNA ligase.